The chain runs to 1342 residues: DNA-directed RNA polymerase subunit beta (1342 aa).

This sequence belongs to the RNA polymerase beta chain family. The RNAP catalytic core consists of 2 alpha, 1 beta, 1 beta' and 1 omega subunit. When a sigma factor is associated with the core the holoenzyme is formed, which can initiate transcription.

It catalyses the reaction RNA(n) + a ribonucleoside 5'-triphosphate = RNA(n+1) + diphosphate. DNA-dependent RNA polymerase catalyzes the transcription of DNA into RNA using the four ribonucleoside triphosphates as substrates. This is DNA-directed RNA polymerase subunit beta from Pasteurella multocida (strain Pm70).